The primary structure comprises 127 residues: Large ribosomal subunit protein bL17 (127 aa).

It belongs to the bacterial ribosomal protein bL17 family. Part of the 50S ribosomal subunit. Contacts protein L32.

The protein is Large ribosomal subunit protein bL17 of Escherichia fergusonii (strain ATCC 35469 / DSM 13698 / CCUG 18766 / IAM 14443 / JCM 21226 / LMG 7866 / NBRC 102419 / NCTC 12128 / CDC 0568-73).